The chain runs to 312 residues: Acetaldehyde dehydrogenase (312 aa).

12–15 is a binding site for NAD(+); that stretch reads SGNV. Catalysis depends on C132, which acts as the Acyl-thioester intermediate. NAD(+) is bound by residues 163–171 and N290; that span reads SAGPGTRAN.

Belongs to the acetaldehyde dehydrogenase family.

It carries out the reaction acetaldehyde + NAD(+) + CoA = acetyl-CoA + NADH + H(+). This chain is Acetaldehyde dehydrogenase (cbzQ), found in Pseudomonas putida (Arthrobacter siderocapsulatus).